Reading from the N-terminus, the 470-residue chain is Argininosuccinate lyase (470 aa).

Belongs to the lyase 1 family. Argininosuccinate lyase subfamily.

The protein localises to the cytoplasm. It catalyses the reaction 2-(N(omega)-L-arginino)succinate = fumarate + L-arginine. It functions in the pathway amino-acid biosynthesis; L-arginine biosynthesis; L-arginine from L-ornithine and carbamoyl phosphate: step 3/3. The sequence is that of Argininosuccinate lyase from Mycobacterium sp. (strain JLS).